We begin with the raw amino-acid sequence, 95 residues long: Small ribosomal subunit protein mS37 (95 aa).

The 43-residue stretch at 27–69 folds into the CHCH domain; that stretch reads ANRCLVLMSNLLQCWSSNGHMNPVCEKLATDLKACTSQNVMGS. 2 short sequence motifs (cx9C motif) span residues 30–40 and 51–61; these read CLVLMSNLLQC and CEKLATDLKAC. Intrachain disulfides connect Cys30–Cys61 and Cys40–Cys51.

The protein belongs to the mitochondrion-specific ribosomal protein mS37 family. In terms of assembly, component of the mitochondrial small ribosomal subunit.

The protein localises to the mitochondrion. Functionally, involved in mitochondrial genome encoded proteins translation. The polypeptide is Small ribosomal subunit protein mS37 (MRP10) (Eremothecium gossypii (strain ATCC 10895 / CBS 109.51 / FGSC 9923 / NRRL Y-1056) (Yeast)).